We begin with the raw amino-acid sequence, 105 residues long: Late embryogenesis abundant protein Lea5-D (105 aa).

The interval 48 to 67 (KVERRDAMKESSSSETRAYS) is disordered. A compositionally biased stretch (low complexity) spans 57 to 67 (ESSSSETRAYS).

The protein belongs to the LEA type 3 family.

The sequence is that of Late embryogenesis abundant protein Lea5-D (LEA5-D) from Gossypium hirsutum (Upland cotton).